Here is a 187-residue protein sequence, read N- to C-terminus: UPF0301 protein PMI0339 (187 aa).

The protein belongs to the UPF0301 (AlgH) family.

This chain is UPF0301 protein PMI0339, found in Proteus mirabilis (strain HI4320).